The sequence spans 165 residues: UPF0262 protein blr1257 (165 aa).

Belongs to the UPF0262 family.

This is UPF0262 protein blr1257 from Bradyrhizobium diazoefficiens (strain JCM 10833 / BCRC 13528 / IAM 13628 / NBRC 14792 / USDA 110).